A 347-amino-acid polypeptide reads, in one-letter code: Adenine deaminase (347 aa).

3 residues coordinate Zn(2+): H16, H18, and H204. E207 (proton donor) is an active-site residue. Residue D285 coordinates Zn(2+). Residue D286 participates in substrate binding.

It belongs to the metallo-dependent hydrolases superfamily. Adenosine and AMP deaminases family. Adenine deaminase type 2 subfamily. Requires Zn(2+) as cofactor.

Its subcellular location is the cytoplasm. The protein localises to the nucleus. The enzyme catalyses adenine + H2O + H(+) = hypoxanthine + NH4(+). Its function is as follows. Catalyzes the hydrolytic deamination of adenine to hypoxanthine. Plays an important role in the purine salvage pathway and in nitrogen catabolism. The sequence is that of Adenine deaminase from Candida glabrata (strain ATCC 2001 / BCRC 20586 / JCM 3761 / NBRC 0622 / NRRL Y-65 / CBS 138) (Yeast).